A 292-amino-acid polypeptide reads, in one-letter code: Phosphatidylglycerol--prolipoprotein diacylglyceryl transferase (292 aa).

The next 7 helical transmembrane spans lie at valine 21 to alanine 41, leucine 60 to tyrosine 80, glycine 98 to histidine 118, phenylalanine 124 to leucine 144, serine 198 to isoleucine 218, glycine 225 to phenylalanine 245, and isoleucine 258 to tryptophan 278. Arginine 143 is a binding site for a 1,2-diacyl-sn-glycero-3-phospho-(1'-sn-glycerol).

This sequence belongs to the Lgt family.

It localises to the cell inner membrane. The catalysed reaction is L-cysteinyl-[prolipoprotein] + a 1,2-diacyl-sn-glycero-3-phospho-(1'-sn-glycerol) = an S-1,2-diacyl-sn-glyceryl-L-cysteinyl-[prolipoprotein] + sn-glycerol 1-phosphate + H(+). The protein operates within protein modification; lipoprotein biosynthesis (diacylglyceryl transfer). Functionally, catalyzes the transfer of the diacylglyceryl group from phosphatidylglycerol to the sulfhydryl group of the N-terminal cysteine of a prolipoprotein, the first step in the formation of mature lipoproteins. The chain is Phosphatidylglycerol--prolipoprotein diacylglyceryl transferase from Erwinia tasmaniensis (strain DSM 17950 / CFBP 7177 / CIP 109463 / NCPPB 4357 / Et1/99).